The chain runs to 509 residues: Group 3 secretory phospholipase A2 (509 aa).

Residues methionine 1 to glycine 19 form the signal peptide. The interval glutamate 123 to arginine 149 is disordered. The tract at residues glycine 150–threonine 291 is phospholipase A2-like. Residues tryptophan 158, glycine 160, and glycine 162 each coordinate Ca(2+). 4 disulfides stabilise this stretch: cysteine 159-cysteine 181, cysteine 180-cysteine 220, cysteine 187-cysteine 213, and cysteine 211-cysteine 244. Residue asparagine 167 is glycosylated (N-linked (GlcNAc...) asparagine). Histidine 184 is an active-site residue. Aspartate 185 lines the Ca(2+) pocket. Aspartate 214 is a catalytic residue. An N-linked (GlcNAc...) asparagine glycan is attached at asparagine 280. A disordered region spans residues tryptophan 283–proline 354. The span at serine 284–serine 296 shows a compositional bias: low complexity. Positions proline 302 to serine 322 are enriched in basic residues. Asparagine 325, asparagine 396, and asparagine 439 each carry an N-linked (GlcNAc...) asparagine glycan. Residues glutamine 458–glycine 482 form a disordered region. The segment covering glutamine 463 to glutamine 473 has biased composition (basic and acidic residues).

Belongs to the phospholipase A2 family. It depends on Ca(2+) as a cofactor. In terms of processing, N-glycosylation does not affect the catalytic activity, but is required for proper secretion. A nonglycosylated form is observed in several cell types. In several cell types, the N- and C-termini are cleaved off. As to expression, expressed in kidney, heart, liver, and skeletal muscle. Also present in placenta and peripheral blood leukocytes. Not detected in colon, thymus, spleen and small intestine. In lung, expressed in bronchial epithelial cells and alveolar macrophages, but scarcely detected in alveolar epithelium, arterial walls and interstitial fibroblasts (at protein level). In joints of osteoarthritis and rheumatoid arthritis, expressed in endothelial cells (at protein level). In normal heart, detected in some vessels. In myocardial tissues with acute infarction, expressed in vascular endothelial cells adjacent to cardiomyocytes and those in lesions with granulation. Expression in cardiomyocytes is scarce (at protein level). In uterus, breast and colon cancers, detected in tumor cells and neighboring microvascular endothelium, but not in normal glandular tissues (at protein level). Expressed in dermal resting mast cells (at protein level) and pulmonary mast cells. Expressed in neuronal fibers (at protein level). Highly expressed in dorsal root ganglia neurons (at protein level). Expressed in Purkinje cells in cerebellum (at protein level). In stomach is preferentially expressed in neuronal fibers and in microvascular endothelium. Sparsely expressed in normal aorta (at protein level). Highly expressed in macrophages and smooth muscle cells in aorta with atheroma.

The protein localises to the secreted. The protein resides in the cell membrane. Its subcellular location is the cytoplasm. It localises to the cytoskeleton. It is found in the microtubule organizing center. The protein localises to the centrosome. The protein resides in the centriole. Its subcellular location is the recycling endosome. The catalysed reaction is a 1,2-diacyl-sn-glycero-3-phosphocholine + H2O = a 1-acyl-sn-glycero-3-phosphocholine + a fatty acid + H(+). The enzyme catalyses 1-hexadecanoyl-2-(9Z,12Z-octadecadienoyl)-sn-glycero-3-phosphocholine + H2O = (9Z,12Z)-octadecadienoate + 1-hexadecanoyl-sn-glycero-3-phosphocholine + H(+). It carries out the reaction 1-hexadecanoyl-2-(5Z,8Z,11Z,14Z-eicosatetraenoyl)-sn-glycero-3-phosphocholine + H2O = 1-hexadecanoyl-sn-glycero-3-phosphocholine + (5Z,8Z,11Z,14Z)-eicosatetraenoate + H(+). It catalyses the reaction 1-hexadecanoyl-2-(9Z,12Z-octadecadienoyl)-sn-glycero-3-phosphoethanolamine + H2O = 1-hexadecanoyl-sn-glycero-3-phosphoethanolamine + (9Z,12Z)-octadecadienoate + H(+). The catalysed reaction is 1-hexadecanoyl-2-(5Z,8Z,11Z,14Z-eicosatetraenoyl)-sn-glycero-3-phosphoethanolamine + H2O = 1-hexadecanoyl-sn-glycero-3-phosphoethanolamine + (5Z,8Z,11Z,14Z)-eicosatetraenoate + H(+). With respect to regulation, arachidonic acid release is markedly increased by glypican, a glycosylphosphatidylinositol-anchored heparan sulfate proteoglycan. In terms of biological role, secretory calcium-dependent phospholipase A2 that primarily targets extracellular phospholipids. Hydrolyzes the ester bond of the fatty acyl group attached at sn-2 position of phospholipids without apparent head group selectivity. Contributes to phospholipid remodeling of low-density lipoprotein (LDL) and high-density lipoprotein (HDL) particles. Hydrolyzes LDL phospholipids releasing unsaturated fatty acids that regulate macrophage differentiation toward foam cells. May act in an autocrine and paracrine manner. Secreted by immature mast cells, acts on nearby fibroblasts upstream to PTDGS to synthesize prostaglandin D2 (PGD2), which in turn promotes mast cell maturation and degranulation via PTGDR. Secreted by epididymal epithelium, acts on immature sperm cells within the duct, modulating the degree of unsaturation of the fatty acyl components of phosphatidylcholines required for acrosome assembly and sperm cell motility. Facilitates the replacement of fatty acyl chains in phosphatidylcholines in sperm membranes from omega-6 and omega-9 to omega-3 polyunsaturated fatty acids (PUFAs). Coupled to lipoxygenase pathway, may process omega-6 PUFAs to generate oxygenated lipid mediators in the male reproductive tract. At pericentrosomal preciliary compartment, negatively regulates ciliogenesis likely by regulating endocytotic recycling of ciliary membrane protein. Coupled to cyclooxygenase pathway provides arachidonate to generate prostaglandin E2 (PGE2), a potent immunomodulatory lipid in inflammation and tumorigenesis. At colonic epithelial barrier, preferentially hydrolyzes phospholipids having arachidonate and docosahexaenoate at sn-2 position, contributing to the generation of oxygenated metabolites involved in colonic stem cell homeostasis. Releases C16:0 and C18:0 lysophosphatidylcholine subclasses from neuron plasma membranes and promotes neurite outgrowth and neuron survival. This chain is Group 3 secretory phospholipase A2, found in Homo sapiens (Human).